Reading from the N-terminus, the 166-residue chain is Zinc finger CCHC domain-containing protein 13 (166 aa).

A CCHC-type 1; degenerate zinc finger spans residues 4-21 (KDFFACGHSGHWARGCPR). The segment at 45 to 62 (YTCYCCGESGRNAKNCVL) adopts a CCHC-type 2; degenerate zinc-finger fold. 4 CCHC-type zinc fingers span residues 65–82 (NICYNCGRSGHIAKDCKD), 89–106 (QHCYTCGRLGHLARDCDR), 110–127 (QKCYSCGKLGHIQKDCAQ), and 128–145 (VKCYRCGEIGHVAINCSK).

The polypeptide is Zinc finger CCHC domain-containing protein 13 (ZCCHC13) (Homo sapiens (Human)).